The chain runs to 264 residues: S-adenosylmethionine decarboxylase proenzyme (264 aa).

Ser-112 (schiff-base intermediate with substrate; via pyruvic acid) is an active-site residue. Ser-112 is modified (pyruvic acid (Ser); by autocatalysis). The active-site Proton acceptor; for processing activity is His-117. Residue Cys-140 is the Proton donor; for catalytic activity of the active site.

Belongs to the prokaryotic AdoMetDC family. Type 2 subfamily. As to quaternary structure, heterooctamer of four alpha and four beta chains arranged as a tetramer of alpha/beta heterodimers. Pyruvate is required as a cofactor. Is synthesized initially as an inactive proenzyme. Formation of the active enzyme involves a self-maturation process in which the active site pyruvoyl group is generated from an internal serine residue via an autocatalytic post-translational modification. Two non-identical subunits are generated from the proenzyme in this reaction, and the pyruvate is formed at the N-terminus of the alpha chain, which is derived from the carboxyl end of the proenzyme. The post-translation cleavage follows an unusual pathway, termed non-hydrolytic serinolysis, in which the side chain hydroxyl group of the serine supplies its oxygen atom to form the C-terminus of the beta chain, while the remainder of the serine residue undergoes an oxidative deamination to produce ammonia and the pyruvoyl group blocking the N-terminus of the alpha chain.

It carries out the reaction S-adenosyl-L-methionine + H(+) = S-adenosyl 3-(methylsulfanyl)propylamine + CO2. Its pathway is amine and polyamine biosynthesis; S-adenosylmethioninamine biosynthesis; S-adenosylmethioninamine from S-adenosyl-L-methionine: step 1/1. In terms of biological role, catalyzes the decarboxylation of S-adenosylmethionine to S-adenosylmethioninamine (dcAdoMet), the propylamine donor required for the synthesis of the polyamines spermine and spermidine from the diamine putrescine. In Escherichia coli O45:K1 (strain S88 / ExPEC), this protein is S-adenosylmethionine decarboxylase proenzyme.